A 546-amino-acid polypeptide reads, in one-letter code: 2-isopropylmalate synthase (546 aa).

Residues 8-271 (ILIFDTTLRD…NKFFNRNSDS (264 aa)) form the Pyruvate carboxyltransferase domain. Mn(2+)-binding residues include D17, H208, H210, and N244. The interval 408 to 546 (QLSLVQVSCG…DKTLLSNPGK (139 aa)) is regulatory domain.

This sequence belongs to the alpha-IPM synthase/homocitrate synthase family. LeuA type 1 subfamily. Homodimer. It depends on Mn(2+) as a cofactor.

It localises to the cytoplasm. The enzyme catalyses 3-methyl-2-oxobutanoate + acetyl-CoA + H2O = (2S)-2-isopropylmalate + CoA + H(+). It functions in the pathway amino-acid biosynthesis; L-leucine biosynthesis; L-leucine from 3-methyl-2-oxobutanoate: step 1/4. In terms of biological role, catalyzes the condensation of the acetyl group of acetyl-CoA with 3-methyl-2-oxobutanoate (2-ketoisovalerate) to form 3-carboxy-3-hydroxy-4-methylpentanoate (2-isopropylmalate). This chain is 2-isopropylmalate synthase, found in Prochlorococcus marinus (strain MIT 9215).